Consider the following 256-residue polypeptide: tRNA (guanine-N(7)-)-methyltransferase (256 aa).

S-adenosyl-L-methionine-binding residues include Glu85, Glu110, Asp137, and Asp159. Asp159 is an active-site residue. Residues Lys163 and Asp195 each contribute to the substrate site.

It belongs to the class I-like SAM-binding methyltransferase superfamily. TrmB family.

It catalyses the reaction guanosine(46) in tRNA + S-adenosyl-L-methionine = N(7)-methylguanosine(46) in tRNA + S-adenosyl-L-homocysteine. It participates in tRNA modification; N(7)-methylguanine-tRNA biosynthesis. Functionally, catalyzes the formation of N(7)-methylguanine at position 46 (m7G46) in tRNA. This chain is tRNA (guanine-N(7)-)-methyltransferase, found in Rhodopseudomonas palustris (strain BisB5).